Reading from the N-terminus, the 278-residue chain is S-methyl-5'-thioadenosine phosphorylase (278 aa).

Phosphate-binding positions include Ser-13, 55–56 (RH), and 88–89 (TA). Met-190 serves as a coordination point for substrate. Thr-191 is a binding site for phosphate. Position 214-216 (214-216 (DYD)) interacts with substrate.

This sequence belongs to the PNP/MTAP phosphorylase family. MTAP subfamily. Homotrimer.

The protein localises to the cytoplasm. It localises to the nucleus. It carries out the reaction S-methyl-5'-thioadenosine + phosphate = 5-(methylsulfanyl)-alpha-D-ribose 1-phosphate + adenine. Its pathway is amino-acid biosynthesis; L-methionine biosynthesis via salvage pathway; S-methyl-5-thio-alpha-D-ribose 1-phosphate from S-methyl-5'-thioadenosine (phosphorylase route): step 1/1. Functionally, catalyzes the reversible phosphorylation of S-methyl-5'-thioadenosine (MTA) to adenine and 5-methylthioribose-1-phosphate. Involved in the breakdown of MTA, a major by-product of polyamine biosynthesis. Responsible for the first step in the methionine salvage pathway after MTA has been generated from S-adenosylmethionine. Has broad substrate specificity with 6-aminopurine nucleosides as preferred substrates. In Anopheles gambiae (African malaria mosquito), this protein is S-methyl-5'-thioadenosine phosphorylase.